A 159-amino-acid chain; its full sequence is NAD(P)H-quinone oxidoreductase subunit J, chloroplastic (159 aa).

It belongs to the complex I 30 kDa subunit family. As to quaternary structure, NDH is composed of at least 16 different subunits, 5 of which are encoded in the nucleus.

The protein resides in the plastid. It localises to the chloroplast thylakoid membrane. The catalysed reaction is a plastoquinone + NADH + (n+1) H(+)(in) = a plastoquinol + NAD(+) + n H(+)(out). It carries out the reaction a plastoquinone + NADPH + (n+1) H(+)(in) = a plastoquinol + NADP(+) + n H(+)(out). In terms of biological role, NDH shuttles electrons from NAD(P)H:plastoquinone, via FMN and iron-sulfur (Fe-S) centers, to quinones in the photosynthetic chain and possibly in a chloroplast respiratory chain. The immediate electron acceptor for the enzyme in this species is believed to be plastoquinone. Couples the redox reaction to proton translocation, and thus conserves the redox energy in a proton gradient. The chain is NAD(P)H-quinone oxidoreductase subunit J, chloroplastic from Triticum aestivum (Wheat).